A 214-amino-acid polypeptide reads, in one-letter code: ATP phosphoribosyltransferase (214 aa).

Belongs to the ATP phosphoribosyltransferase family. Short subfamily. As to quaternary structure, heteromultimer composed of HisG and HisZ subunits.

It localises to the cytoplasm. It catalyses the reaction 1-(5-phospho-beta-D-ribosyl)-ATP + diphosphate = 5-phospho-alpha-D-ribose 1-diphosphate + ATP. It functions in the pathway amino-acid biosynthesis; L-histidine biosynthesis; L-histidine from 5-phospho-alpha-D-ribose 1-diphosphate: step 1/9. In terms of biological role, catalyzes the condensation of ATP and 5-phosphoribose 1-diphosphate to form N'-(5'-phosphoribosyl)-ATP (PR-ATP). Has a crucial role in the pathway because the rate of histidine biosynthesis seems to be controlled primarily by regulation of HisG enzymatic activity. The chain is ATP phosphoribosyltransferase from Azoarcus sp. (strain BH72).